We begin with the raw amino-acid sequence, 101 residues long: Urease subunit beta (101 aa).

It belongs to the urease beta subunit family. In terms of assembly, heterotrimer of UreA (gamma), UreB (beta) and UreC (alpha) subunits. Three heterotrimers associate to form the active enzyme.

It is found in the cytoplasm. The enzyme catalyses urea + 2 H2O + H(+) = hydrogencarbonate + 2 NH4(+). It participates in nitrogen metabolism; urea degradation; CO(2) and NH(3) from urea (urease route): step 1/1. This Paraburkholderia xenovorans (strain LB400) protein is Urease subunit beta.